A 512-amino-acid chain; its full sequence is Probable cytosol aminopeptidase (512 aa).

Residues lysine 281 and aspartate 286 each contribute to the Mn(2+) site. Residue lysine 293 is part of the active site. Residues aspartate 304, aspartate 363, and glutamate 365 each contribute to the Mn(2+) site. Residue arginine 367 is part of the active site.

The protein belongs to the peptidase M17 family. It depends on Mn(2+) as a cofactor.

The protein localises to the cytoplasm. The enzyme catalyses Release of an N-terminal amino acid, Xaa-|-Yaa-, in which Xaa is preferably Leu, but may be other amino acids including Pro although not Arg or Lys, and Yaa may be Pro. Amino acid amides and methyl esters are also readily hydrolyzed, but rates on arylamides are exceedingly low.. It catalyses the reaction Release of an N-terminal amino acid, preferentially leucine, but not glutamic or aspartic acids.. Functionally, presumably involved in the processing and regular turnover of intracellular proteins. Catalyzes the removal of unsubstituted N-terminal amino acids from various peptides. The chain is Probable cytosol aminopeptidase from Koribacter versatilis (strain Ellin345).